We begin with the raw amino-acid sequence, 456 residues long: UDP-N-acetylmuramoylalanine--D-glutamate ligase (456 aa).

113–119 (GTNGKTT) lines the ATP pocket.

This sequence belongs to the MurCDEF family.

The protein localises to the cytoplasm. It catalyses the reaction UDP-N-acetyl-alpha-D-muramoyl-L-alanine + D-glutamate + ATP = UDP-N-acetyl-alpha-D-muramoyl-L-alanyl-D-glutamate + ADP + phosphate + H(+). It functions in the pathway cell wall biogenesis; peptidoglycan biosynthesis. Cell wall formation. Catalyzes the addition of glutamate to the nucleotide precursor UDP-N-acetylmuramoyl-L-alanine (UMA). This Rippkaea orientalis (strain PCC 8801 / RF-1) (Cyanothece sp. (strain PCC 8801)) protein is UDP-N-acetylmuramoylalanine--D-glutamate ligase.